The following is an 886-amino-acid chain: DNA double-strand break repair Rad50 ATPase (886 aa).

ATP-binding positions include R13, 33 to 39 (NGAGKSS), and Q128. Coiled-coil stretches lie at residues 183 to 360 (EQIK…LLET) and 400 to 433 (KEIT…LKSA). The region spanning 392-489 (LSKAKEEEKE…RLEKVEKALE (98 aa)) is the Zinc-hook domain. Residues C437 and C440 each coordinate Zn(2+). 2 coiled-coil regions span residues 489–518 (EKQE…DAEK) and 545–713 (SSAS…KKVE). Residue 792–797 (FLSGGE) coordinates ATP.

The protein belongs to the SMC family. RAD50 subfamily. As to quaternary structure, homodimer. Forms a heterotetramer composed of two Mre11 subunits and two Rad50 subunits. Zn(2+) serves as cofactor.

Part of the Rad50/Mre11 complex, which is involved in the early steps of DNA double-strand break (DSB) repair. The complex may facilitate opening of the processed DNA ends to aid in the recruitment of HerA and NurA. Rad50 controls the balance between DNA end bridging and DNA resection via ATP-dependent structural rearrangements of the Rad50/Mre11 complex. This chain is DNA double-strand break repair Rad50 ATPase, found in Archaeoglobus fulgidus (strain ATCC 49558 / DSM 4304 / JCM 9628 / NBRC 100126 / VC-16).